The following is a 142-amino-acid chain: Small ribosomal subunit protein uS12 (142 aa).

Residues 1 to 22 are disordered; that stretch reads MPTFNQLVRKGRKAAKKKSTAP. Residues 9-19 are compositionally biased toward basic residues; it reads RKGRKAAKKKS. Aspartate 102 is subject to 3-methylthioaspartic acid.

This sequence belongs to the universal ribosomal protein uS12 family. In terms of assembly, part of the 30S ribosomal subunit. Contacts proteins S8 and S17. May interact with IF1 in the 30S initiation complex.

In terms of biological role, with S4 and S5 plays an important role in translational accuracy. Functionally, interacts with and stabilizes bases of the 16S rRNA that are involved in tRNA selection in the A site and with the mRNA backbone. Located at the interface of the 30S and 50S subunits, it traverses the body of the 30S subunit contacting proteins on the other side and probably holding the rRNA structure together. The combined cluster of proteins S8, S12 and S17 appears to hold together the shoulder and platform of the 30S subunit. The protein is Small ribosomal subunit protein uS12 of Acetivibrio thermocellus (strain ATCC 27405 / DSM 1237 / JCM 9322 / NBRC 103400 / NCIMB 10682 / NRRL B-4536 / VPI 7372) (Clostridium thermocellum).